A 974-amino-acid chain; its full sequence is Translation initiation factor IF-2 (974 aa).

Disordered stretches follow at residues 67–86, 101–133, and 146–385; these read TRKH…ARTI, DVAE…RREA, and RQER…TFQA. The segment covering 105–114 has biased composition (low complexity); sequence GAEQGQAQVA. Composition is skewed to basic and acidic residues over residues 121–133 and 146–181; these read ELKR…RREA and RQER…KRAA. Low complexity predominate over residues 182-197; it reads AEAAAAQQAAAQQAAE. Residues 210–261 are compositionally biased toward basic and acidic residues; sequence EEARAAAERAAQREAAKKAEDAAREAADKARAEQEEIRKRREAAEAEARAIR. A compositionally biased stretch (low complexity) spans 313–329; it reads PAGATPATTQAPAAGAG. The span at 358-371 shows a compositional bias: gly residues; the sequence is SSGGVDRGWRGGPK. In terms of domain architecture, tr-type G spans 474–643; that stretch reads PRPPVVTVMG…LLQAEVLELK (170 aa). A G1 region spans residues 483–490; the sequence is GHVDHGKT. 483–490 provides a ligand contact to GTP; that stretch reads GHVDHGKT. The interval 508 to 512 is G2; the sequence is GITQH. Residues 529–532 form a G3 region; sequence DTPG. GTP contacts are provided by residues 529–533 and 583–586; these read DTPGH and NKID. A G4 region spans residues 583-586; sequence NKID. The segment at 619–621 is G5; the sequence is SAK.

The protein belongs to the TRAFAC class translation factor GTPase superfamily. Classic translation factor GTPase family. IF-2 subfamily.

It is found in the cytoplasm. One of the essential components for the initiation of protein synthesis. Protects formylmethionyl-tRNA from spontaneous hydrolysis and promotes its binding to the 30S ribosomal subunits. Also involved in the hydrolysis of GTP during the formation of the 70S ribosomal complex. The chain is Translation initiation factor IF-2 from Burkholderia vietnamiensis (strain G4 / LMG 22486) (Burkholderia cepacia (strain R1808)).